A 331-amino-acid polypeptide reads, in one-letter code: Ketol-acid reductoisomerase (NADP(+)) (331 aa).

Positions 2–182 (AQLFYDSDAD…GGTRAGILET (181 aa)) constitute a KARI N-terminal Rossmann domain. Residues 25–28 (YGSQ), Ser-51, Ser-53, and 83–86 (DEFQ) contribute to the NADP(+) site. His-108 is an active-site residue. Gly-134 lines the NADP(+) pocket. One can recognise a KARI C-terminal knotted domain in the interval 183 to 328 (NFKEETETDL…KGLRAMFSWL (146 aa)). The Mg(2+) site is built by Asp-191, Glu-195, Glu-227, and Glu-231. Residue Ser-252 participates in substrate binding.

The protein belongs to the ketol-acid reductoisomerase family. It depends on Mg(2+) as a cofactor.

It catalyses the reaction (2R)-2,3-dihydroxy-3-methylbutanoate + NADP(+) = (2S)-2-acetolactate + NADPH + H(+). The enzyme catalyses (2R,3R)-2,3-dihydroxy-3-methylpentanoate + NADP(+) = (S)-2-ethyl-2-hydroxy-3-oxobutanoate + NADPH + H(+). It participates in amino-acid biosynthesis; L-isoleucine biosynthesis; L-isoleucine from 2-oxobutanoate: step 2/4. Its pathway is amino-acid biosynthesis; L-valine biosynthesis; L-valine from pyruvate: step 2/4. Functionally, involved in the biosynthesis of branched-chain amino acids (BCAA). Catalyzes an alkyl-migration followed by a ketol-acid reduction of (S)-2-acetolactate (S2AL) to yield (R)-2,3-dihydroxy-isovalerate. In the isomerase reaction, S2AL is rearranged via a Mg-dependent methyl migration to produce 3-hydroxy-3-methyl-2-ketobutyrate (HMKB). In the reductase reaction, this 2-ketoacid undergoes a metal-dependent reduction by NADPH to yield (R)-2,3-dihydroxy-isovalerate. This is Ketol-acid reductoisomerase (NADP(+)) from Prochlorococcus marinus (strain MIT 9313).